The chain runs to 128 residues: MAFKVVVSQKEVTHQIEVEDGKALNGLVIGDEFDGGIVGLDGYTLKVTGGADKNGFTMKKDVPGTRRIKSLLSGGIGYHPKSDGVKRRKTVRGNTIADDIVQVNTVVVSAGSKAIADILGVGDEEEEE.

It belongs to the eukaryotic ribosomal protein eS6 family.

The chain is Small ribosomal subunit protein eS6 from Methanobrevibacter smithii (strain ATCC 35061 / DSM 861 / OCM 144 / PS).